The chain runs to 290 residues: MVRLHVKKGDESQFLFDTSVTVPVEELVKQITAIYNGRLKIDRICSEMGELAEHGITMPPNMQGLADEQIEELKLKDEWEERCVPSGGSVFKKDEIGRRNGHAPSDSMKKVLQKTMEEAKALISKKQAEANVCVTLEMVKEATDQLRGAVMIVYPMGLPPHDPIRMEFENNEDLSGTHAGQLVIEEPESQLWWAGKELQRKQKLSDYVGKNEKTRIIVKIQKRGQGAPAREPVITQEEQKKLMMHYYRRQEEFKKLEEDEDISYLNAEWADSNSLKRQFQGVKDIKWKPR.

The protein belongs to the CFAP298 family.

It is found in the cytoplasm. The protein resides in the cytoskeleton. It localises to the cilium basal body. Functionally, plays a role in motile cilium function, possibly by acting on outer dynein arm assembly. Seems to be important for initiation rather than maintenance of cilium motility. Required for correct positioning of the cilium at the apical cell surface, suggesting an additional role in the planar cell polarity (PCP) pathway. May suppress canonical Wnt signaling activity. This Xenopus laevis (African clawed frog) protein is Cilia- and flagella-associated protein 298-A (cfap298-a).